Reading from the N-terminus, the 631-residue chain is Pescadillo homolog (631 aa).

The 94-residue stretch at Arg321–Leu414 folds into the BRCT domain. Basic and acidic residues predominate over residues Ser428–His442. 2 disordered regions span residues Ser428–Gln471 and Tyr489–Glu560. Phosphoserine occurs at positions 453 and 457. Acidic residues-rich tracts occupy residues Ser453–Gln471 and Val498–Asp525. Residues Glu526–Met538 are compositionally biased toward basic and acidic residues. Residues Lys544–Val553 show a composition bias toward basic residues. Positions Leu593–Leu629 form a coiled coil.

It belongs to the pescadillo family.

The protein localises to the nucleus. It localises to the nucleolus. Its subcellular location is the nucleoplasm. Its function is as follows. Required for maturation of ribosomal RNAs and formation of the large ribosomal subunit. This Drosophila persimilis (Fruit fly) protein is Pescadillo homolog.